Reading from the N-terminus, the 258-residue chain is Synapse differentiation-inducing gene protein 1-like (258 aa).

The Extracellular segment spans residues 1-182 (MESLSELQNP…FIVIPPRDHL (182 aa)). Residues 183–203 (GLAIFSMLCCFWPLGIAAFYF) traverse the membrane as a helical segment. The Cytoplasmic segment spans residues 204-228 (SQGTSKAVTKGDFPLASIASRRALF). The chain crosses the membrane as a helical span at residues 229–249 (LAALSITIGTGVYVGVVVALI). Residues 250–258 (AYLSKPGHI) lie on the Extracellular side of the membrane.

The protein belongs to the CD225/Dispanin family.

The protein resides in the membrane. Its subcellular location is the golgi apparatus. It is found in the cis-Golgi network. This Danio rerio (Zebrafish) protein is Synapse differentiation-inducing gene protein 1-like (syndig1l).